A 74-amino-acid chain; its full sequence is High-potential iron-sulfur protein (74 aa).

4 residues coordinate [4Fe-4S] cluster: cysteine 36, cysteine 39, cysteine 53, and cysteine 67.

The protein belongs to the high-potential iron-sulfur protein (HiPIP) family. Homodimer.

In terms of biological role, specific class of high-redox-potential 4Fe-4S ferredoxins. Functions in anaerobic electron transport in most purple and in some other photosynthetic bacteria and in at least one genus (Paracoccus) of halophilic, denitrifying bacteria. This Rubrivivax gelatinosus (Rhodocyclus gelatinosus) protein is High-potential iron-sulfur protein (hip).